A 116-amino-acid chain; its full sequence is MRSSVGEFMIYQVIGTVIGIAGIIVSFARFRESRTSPGGLLLWLILWVSVILFSLNPPFSTRIANLLGIGRGLDFLLIIGILGAYYLLFRIYLMVDRIQQDITELVHEIALREHDD.

The next 3 helical transmembrane spans lie at 8–28 (FMIY…VSFA), 39–59 (GLLL…NPPF), and 75–95 (FLLI…YLMV).

This sequence to M.jannaschii MJ1580.

The protein localises to the cell membrane. This is an uncharacterized protein from Methanothermobacter thermautotrophicus (strain ATCC 29096 / DSM 1053 / JCM 10044 / NBRC 100330 / Delta H) (Methanobacterium thermoautotrophicum).